The chain runs to 230 residues: Ribonuclease 3 (230 aa).

An RNase III domain is found at 5–134 (EALLKSSFAI…FLGALLLDKG (130 aa)). E47 is a Mg(2+) binding site. D51 is a catalytic residue. Mg(2+) is bound by residues D120 and E123. Residue E123 is part of the active site. A DRBM domain is found at 160-229 (DYKTSLQEIL…AENALKALSE (70 aa)).

The protein belongs to the ribonuclease III family. As to quaternary structure, homodimer. The cofactor is Mg(2+).

Its subcellular location is the cytoplasm. It carries out the reaction Endonucleolytic cleavage to 5'-phosphomonoester.. Its function is as follows. Digests double-stranded RNA. Involved in the processing of primary rRNA transcript to yield the immediate precursors to the large and small rRNAs (23S and 16S). Processes some mRNAs, and tRNAs when they are encoded in the rRNA operon. Processes pre-crRNA and tracrRNA of type II CRISPR loci if present in the organism. The chain is Ribonuclease 3 from Streptococcus uberis (strain ATCC BAA-854 / 0140J).